Consider the following 416-residue polypeptide: Adenylosuccinate synthetase (416 aa).

Residues 12-18 (GDEGKGK) and 40-42 (GHT) each bind GTP. The active-site Proton acceptor is Asp13. Asp13 and Gly40 together coordinate Mg(2+). IMP-binding positions include 13 to 16 (DEGK), 38 to 41 (NAGH), Thr125, Arg139, Gln219, Thr234, and Arg298. His41 acts as the Proton donor in catalysis. Residue 294–300 (TVTGRKR) coordinates substrate. Residues Arg300, 326-328 (KLD), and 404-406 (STS) contribute to the GTP site.

This sequence belongs to the adenylosuccinate synthetase family. As to quaternary structure, homodimer. It depends on Mg(2+) as a cofactor.

Its subcellular location is the cytoplasm. It carries out the reaction IMP + L-aspartate + GTP = N(6)-(1,2-dicarboxyethyl)-AMP + GDP + phosphate + 2 H(+). It functions in the pathway purine metabolism; AMP biosynthesis via de novo pathway; AMP from IMP: step 1/2. Its function is as follows. Plays an important role in the de novo pathway of purine nucleotide biosynthesis. Catalyzes the first committed step in the biosynthesis of AMP from IMP. The polypeptide is Adenylosuccinate synthetase (Aliarcobacter butzleri (strain RM4018) (Arcobacter butzleri)).